Consider the following 178-residue polypeptide: Caveolin-1 (178 aa).

S2 is modified (N-acetylserine). At S2 the chain carries Phosphoserine. The required for homooligomerization stretch occupies residues 2–94 (SGGKYVDSEG…WKASFTTFTV (93 aa)). Over 2-104 (SGGKYVDSEG…TKYWFYRLLS (103 aa)) the chain is Cytoplasmic. Residue K5 is modified to N6-acetyllysine; alternate. K5 participates in a covalent cross-link: Glycyl lysine isopeptide (Lys-Gly) (interchain with G-Cter in ubiquitin); alternate. Y6 bears the Phosphotyrosine mark. At S9 the chain carries Phosphoserine. Position 14 is a phosphotyrosine; by ABL1 (Y14). A Phosphotyrosine modification is found at Y25. Glycyl lysine isopeptide (Lys-Gly) (interchain with G-Cter in ubiquitin) cross-links involve residues K26, K39, K47, and K57. Positions 82–94 (DGIWKASFTTFTV) are interaction with CAVIN3. An intramembrane region (helical) is located at residues 105–125 (ALFGIPMALIWGIYFAILSFL). At 126-178 (HIWAVVPCIKSFLIEIQCISRVYSIYVHTFCDPLFEAIGKIFSSIRINMQKEI) the chain is on the cytoplasmic side. Residues 131 to 142 (VPCIKSFLIEIQ) form an interacts with SPRY1, SPRY2, SPRY3 and SPRY4 region. Residues C133, C143, and C156 are each lipidated (S-palmitoyl cysteine). Residues 149 to 160 (SIYVHTFCDPLF) are interacts with SPRY1, SPRY2, and SPRY4. An interacts with SPRY1, SPRY2, SPRY3 and SPRY4 region spans residues 167 to 178 (FSSIRINMQKEI).

It belongs to the caveolin family. Homooligomer. Interacts with GLIPR2. Interacts with NOSTRIN. Interacts with SNAP25 and STX1A. Interacts (via the N-terminus) with DPP4; the interaction is direct. Interacts with CTNNB1, CDH1 and JUP. Interacts with PACSIN2; this interaction induces membrane tubulation. Interacts with SLC7A9. Interacts with BMX and BTK. Interacts with TGFBR1. Interacts with CAVIN3 (via leucine-zipper domain) in a cholesterol-sensitive manner. Interacts with CAVIN1. Interacts with EHD2 in a cholesterol-dependent manner. Forms a ternary complex with UBXN6 and VCP; mediates CAV1 targeting to lysosomes for degradation. Interacts with ABCG1; this interaction regulates ABCG1-mediated cholesterol efflux. Interacts with NEU3; this interaction enhances NEU3 sialidase activity within caveola. Interacts (via C-terminus) with SPRY1, SPRY2 (via C-terminus), SPRY3, and SPRY4. Interacts with IGFBP5; this interaction allows trafficking of IGFBP5 from the plasma membrane to the nucleus. Phosphorylated at Tyr-14 by ABL1 in response to oxidative stress. In terms of processing, ubiquitinated. Undergo monoubiquitination and multi- and/or polyubiquitination. Monoubiquitination of N-terminal lysines promotes integration in a ternary complex with UBXN6 and VCP which promotes oligomeric CAV1 targeting to lysosomes for degradation. Ubiquitinated by ZNRF1; leading to degradation and modulation of the TLR4-mediated immune response.

It localises to the golgi apparatus membrane. The protein resides in the cell membrane. Its subcellular location is the membrane. The protein localises to the caveola. It is found in the membrane raft. In terms of biological role, may act as a scaffolding protein within caveolar membranes. Forms a stable heterooligomeric complex with CAV2 that targets to lipid rafts and drives caveolae formation. Mediates the recruitment of CAVIN proteins (CAVIN1/2/3/4) to the caveolae. Interacts directly with G-protein alpha subunits and can functionally regulate their activity. Involved in the costimulatory signal essential for T-cell receptor (TCR)-mediated T-cell activation. Its binding to DPP4 induces T-cell proliferation and NF-kappa-B activation in a T-cell receptor/CD3-dependent manner. Recruits CTNNB1 to caveolar membranes and may regulate CTNNB1-mediated signaling through the Wnt pathway. Negatively regulates TGFB1-mediated activation of SMAD2/3 by mediating the internalization of TGFBR1 from membrane rafts leading to its subsequent degradation. Binds 20(S)-hydroxycholesterol (20(S)-OHC). The protein is Caveolin-1 (CAV1) of Loxodonta africana (African elephant).